We begin with the raw amino-acid sequence, 257 residues long: Thiazole synthase (257 aa).

The Schiff-base intermediate with DXP role is filled by K100. 1-deoxy-D-xylulose 5-phosphate-binding positions include G161, 187–188, and 209–210; these read AG and NT.

Belongs to the ThiG family. Homotetramer. Forms heterodimers with either ThiH or ThiS.

Its subcellular location is the cytoplasm. It catalyses the reaction [ThiS sulfur-carrier protein]-C-terminal-Gly-aminoethanethioate + 2-iminoacetate + 1-deoxy-D-xylulose 5-phosphate = [ThiS sulfur-carrier protein]-C-terminal Gly-Gly + 2-[(2R,5Z)-2-carboxy-4-methylthiazol-5(2H)-ylidene]ethyl phosphate + 2 H2O + H(+). It participates in cofactor biosynthesis; thiamine diphosphate biosynthesis. Catalyzes the rearrangement of 1-deoxy-D-xylulose 5-phosphate (DXP) to produce the thiazole phosphate moiety of thiamine. Sulfur is provided by the thiocarboxylate moiety of the carrier protein ThiS. In vitro, sulfur can be provided by H(2)S. The polypeptide is Thiazole synthase (Zymomonas mobilis subsp. mobilis (strain ATCC 31821 / ZM4 / CP4)).